The chain runs to 429 residues: Histidine--tRNA ligase (429 aa).

The protein belongs to the class-II aminoacyl-tRNA synthetase family. As to quaternary structure, homodimer.

The protein resides in the cytoplasm. The enzyme catalyses tRNA(His) + L-histidine + ATP = L-histidyl-tRNA(His) + AMP + diphosphate + H(+). This chain is Histidine--tRNA ligase, found in Pseudomonas fluorescens (strain Pf0-1).